The primary structure comprises 529 residues: Apolipoprotein N-acyltransferase (529 aa).

5 helical membrane-spanning segments follow: residues 8–28 (VMLA…AVGA), 66–86 (ILPA…AGLW), 105–125 (LAIL…VAAA), 178–198 (LLGL…PALI), and 203–223 (GMGP…GYGF). A CN hydrolase domain is found at 242 to 491 (VQPAIDQSRK…VGILDATLSG (250 aa)). The Proton acceptor role is filled by Glu286. The active site involves Lys350. Cys403 serves as the catalytic Nucleophile. Residues 505–525 (YFWLIFSILMIVAVFPALSFA) form a helical membrane-spanning segment.

The protein belongs to the CN hydrolase family. Apolipoprotein N-acyltransferase subfamily.

The protein localises to the cell inner membrane. It catalyses the reaction N-terminal S-1,2-diacyl-sn-glyceryl-L-cysteinyl-[lipoprotein] + a glycerophospholipid = N-acyl-S-1,2-diacyl-sn-glyceryl-L-cysteinyl-[lipoprotein] + a 2-acyl-sn-glycero-3-phospholipid + H(+). It functions in the pathway protein modification; lipoprotein biosynthesis (N-acyl transfer). In terms of biological role, catalyzes the phospholipid dependent N-acylation of the N-terminal cysteine of apolipoprotein, the last step in lipoprotein maturation. The protein is Apolipoprotein N-acyltransferase of Agrobacterium fabrum (strain C58 / ATCC 33970) (Agrobacterium tumefaciens (strain C58)).